The following is a 416-amino-acid chain: Leu/Ile/Val-binding protein homolog 4 (416 aa).

The first 26 residues, 1-26, serve as a signal peptide directing secretion; the sequence is MSLKVFLQAGVACAALSLAGAAGASA.

This sequence belongs to the leucine-binding protein family.

In terms of biological role, component of an amino-acid transport system. This chain is Leu/Ile/Val-binding protein homolog 4, found in Brucella abortus (strain 2308).